Reading from the N-terminus, the 98-residue chain is UPF0235 protein Pmen_4153 (98 aa).

This sequence belongs to the UPF0235 family.

This is UPF0235 protein Pmen_4153 from Ectopseudomonas mendocina (strain ymp) (Pseudomonas mendocina).